Reading from the N-terminus, the 120-residue chain is Large ribosomal subunit protein bL17 (120 aa).

It belongs to the bacterial ribosomal protein bL17 family. Part of the 50S ribosomal subunit. Contacts protein L32.

The sequence is that of Large ribosomal subunit protein bL17 from Anoxybacillus flavithermus (strain DSM 21510 / WK1).